The following is a 720-amino-acid chain: Protein O-mannosyl-transferase 1 (720 aa).

The next 8 helical transmembrane spans lie at 7-27 (PVSV…LALF), 67-87 (FGHM…NFVW), 105-125 (LIPA…VVEL), 127-147 (YSHF…SLIV), 150-170 (RFML…LSYL), 178-198 (SFFK…GIGV), 201-221 (MGMF…WQLI), and 239-259 (FLAL…IHLT). 3 MIR domains span residues 291–354 (PLDV…IKDP), 365–422 (PKPV…VDIV), and 426–486 (SEKE…VEEH). Transmembrane regions (helical) follow at residues 570-590 (IVTW…FLTY), 609-629 (LVLA…PFFL), 633-653 (TLFL…IPIV), and 670-690 (AFGG…HSLS).

It belongs to the glycosyltransferase 39 family. In terms of tissue distribution, widely expressed. Has particularly strong expression in testis, ovary, brain, liver and heart.

It is found in the endoplasmic reticulum membrane. It carries out the reaction a di-trans,poly-cis-dolichyl beta-D-mannosyl phosphate + L-seryl-[protein] = 3-O-(alpha-D-mannosyl)-L-seryl-[protein] + a di-trans,poly-cis-dolichyl phosphate + H(+). It catalyses the reaction a di-trans,poly-cis-dolichyl beta-D-mannosyl phosphate + L-threonyl-[protein] = 3-O-(alpha-D-mannosyl)-L-threonyl-[protein] + a di-trans,poly-cis-dolichyl phosphate + H(+). It participates in protein modification; protein glycosylation. Its function is as follows. Transfers mannosyl residues to the hydroxyl group of serine or threonine residues. Coexpression of both POMT1 and POMT2 is necessary for enzyme activity, expression of either POMT1 or POMT2 alone is insufficient. The polypeptide is Protein O-mannosyl-transferase 1 (Danio rerio (Zebrafish)).